We begin with the raw amino-acid sequence, 227 residues long: MAHAVQYGFQDAAAPIMEELLYFHDHTLMIVFMISSLVLYIISLMLSTELTHTSTMDAQEVETVWTILPAVILILIALPSLRILYMMDEIETPSLTLKTVGHQWYWSYEYTDYDKLCFDSYMTPTPDLEPGDLRLLEVDNRVVLPTEMSIRMLITSEDVLHSWTVPALGIKTDAIPGRLNQATLMTSRVGIYYGQCSEICGANHSYMPIVLELVPLKYFEEWLLKTL.

At 1-14 the chain is on the mitochondrial intermembrane side; that stretch reads MAHAVQYGFQDAAA. A helical transmembrane segment spans residues 15–45; sequence PIMEELLYFHDHTLMIVFMISSLVLYIISLM. At 46-59 the chain is on the mitochondrial matrix side; it reads LSTELTHTSTMDAQ. The helical transmembrane segment at 60 to 87 threads the bilayer; sequence EVETVWTILPAVILILIALPSLRILYMM. Topologically, residues 88 to 227 are mitochondrial intermembrane; it reads DEIETPSLTL…YFEEWLLKTL (140 aa). Residues histidine 161, cysteine 196, glutamate 198, cysteine 200, histidine 204, and methionine 207 each coordinate Cu cation. Glutamate 198 lines the Mg(2+) pocket. A Phosphotyrosine modification is found at tyrosine 218.

The protein belongs to the cytochrome c oxidase subunit 2 family. In terms of assembly, component of the cytochrome c oxidase (complex IV, CIV), a multisubunit enzyme composed of 14 subunits. The complex is composed of a catalytic core of 3 subunits MT-CO1, MT-CO2 and MT-CO3, encoded in the mitochondrial DNA, and 11 supernumerary subunits COX4I, COX5A, COX5B, COX6A, COX6B, COX6C, COX7A, COX7B, COX7C, COX8 and NDUFA4, which are encoded in the nuclear genome. The complex exists as a monomer or a dimer and forms supercomplexes (SCs) in the inner mitochondrial membrane with NADH-ubiquinone oxidoreductase (complex I, CI) and ubiquinol-cytochrome c oxidoreductase (cytochrome b-c1 complex, complex III, CIII), resulting in different assemblies (supercomplex SCI(1)III(2)IV(1) and megacomplex MCI(2)III(2)IV(2)). Found in a complex with TMEM177, COA6, COX18, COX20, SCO1 and SCO2. Interacts with TMEM177 in a COX20-dependent manner. Interacts with COX20. Interacts with COX16. Cu cation is required as a cofactor.

It is found in the mitochondrion inner membrane. The enzyme catalyses 4 Fe(II)-[cytochrome c] + O2 + 8 H(+)(in) = 4 Fe(III)-[cytochrome c] + 2 H2O + 4 H(+)(out). Its function is as follows. Component of the cytochrome c oxidase, the last enzyme in the mitochondrial electron transport chain which drives oxidative phosphorylation. The respiratory chain contains 3 multisubunit complexes succinate dehydrogenase (complex II, CII), ubiquinol-cytochrome c oxidoreductase (cytochrome b-c1 complex, complex III, CIII) and cytochrome c oxidase (complex IV, CIV), that cooperate to transfer electrons derived from NADH and succinate to molecular oxygen, creating an electrochemical gradient over the inner membrane that drives transmembrane transport and the ATP synthase. Cytochrome c oxidase is the component of the respiratory chain that catalyzes the reduction of oxygen to water. Electrons originating from reduced cytochrome c in the intermembrane space (IMS) are transferred via the dinuclear copper A center (CU(A)) of subunit 2 and heme A of subunit 1 to the active site in subunit 1, a binuclear center (BNC) formed by heme A3 and copper B (CU(B)). The BNC reduces molecular oxygen to 2 water molecules using 4 electrons from cytochrome c in the IMS and 4 protons from the mitochondrial matrix. This chain is Cytochrome c oxidase subunit 2 (MT-CO2), found in Galago senegalensis (Northern lesser bushbaby).